We begin with the raw amino-acid sequence, 114 residues long: Large ribosomal subunit protein bL19 (114 aa).

It belongs to the bacterial ribosomal protein bL19 family.

Its function is as follows. This protein is located at the 30S-50S ribosomal subunit interface and may play a role in the structure and function of the aminoacyl-tRNA binding site. The polypeptide is Large ribosomal subunit protein bL19 (Thermobifida fusca (strain YX)).